A 1873-amino-acid chain; its full sequence is Voltage-dependent L-type calcium channel subunit alpha-1S (1873 aa).

A disordered region spans residues 1-23 (MEPSSPQDEGLRKKQPKKPVPEI). Topologically, residues 1–51 (MEPSSPQDEGLRKKQPKKPVPEILPRPPRALFCLTLENPLRKACISIVEWK) are cytoplasmic. One copy of the I repeat lies at 38–337 (NPLRKACISI…LVLGVLSGEF (300 aa)). The chain crosses the membrane as a helical span at residues 52–70 (PFETIILLTIFANCVALAV). The Extracellular portion of the chain corresponds to 71-85 (YLPMPEDDNNSLNLG). The N-linked (GlcNAc...) asparagine glycan is linked to Asn79. A helical transmembrane segment spans residues 86-106 (LEKLEYFFLIVFSIEAAMKII). Topologically, residues 107-115 (AYGFLFHQD) are cytoplasmic. The chain crosses the membrane as a helical span at residues 116-136 (AYLRSGWNVLDFTIVFLGVFT). Over 137 to 160 (VILEQVNVIQSHTAPMSSKGAGLD) the chain is Extracellular. A helical transmembrane segment spans residues 161–179 (VKALRAFRVLRPLRLVSGV). The Cytoplasmic portion of the chain corresponds to 180–196 (PSLQVVLNSIFKAMLPL). The helical transmembrane segment at 197–218 (FHIALLVLFMVIIYAIIGLELF) threads the bilayer. Residues 219-279 (KGKMHKTCYF…HGITHFDNFG (61 aa)) are Extracellular-facing. Cystine bridges form between Cys226–Cys254 and Cys245–Cys261. Asn257 is a glycosylation site (N-linked (GlcNAc...) asparagine). An intramembrane region (pore-forming) is located at residues 280-301 (FSMLTVYQCITMEGWTDVLYWV). The Selectivity filter of repeat I motif lies at 290 to 293 (TMEG). Ca(2+) is bound at residue Glu292. Over 302–309 (NDAIGNEW) the chain is Extracellular. A helical transmembrane segment spans residues 310-330 (PWIYFVTLILLGSFFILNLVL). At 331–432 (GVLSGEFTKE…WKCHDIVKSK (102 aa)) the chain is on the cytoplasmic side. The segment at 357–374 (QQLDEDLRGYMSWITQGE) is binding to the beta subunit. 2 positions are modified to phosphoserine: Ser393 and Ser397. The II repeat unit spans residues 418–664 (NRIFRWKCHD…VFLAIAVDNL (247 aa)). Residues 433 to 451 (VFYWLVILIVALNTLSIAS) traverse the membrane as a helical segment. Topologically, residues 452–462 (EHHNQPLWLTR) are extracellular. A helical membrane pass occupies residues 463 to 483 (LQDIANRVLLSLFTTEMLMKM). Topologically, residues 484–494 (YGLGLRQYFMS) are cytoplasmic. Residues 495–514 (IFNRFDCFVVCSGILEILLV) form a helical membrane-spanning segment. At 515-523 (ESGAMTPLG) the chain is on the extracellular side. A helical transmembrane segment spans residues 524–542 (ISVLRCIRLLRIFKITKYW). Over 543–561 (TSLSNLVASLLNSIRSIAS) the chain is Cytoplasmic. A helical membrane pass occupies residues 562 to 581 (LLLLLFLFIVIFALLGMQLF). Topologically, residues 582–601 (GGRYDFEDTEVRRSNFDNFP) are extracellular. The segment at residues 602–623 (QALISVFQVLTGEDWTSMMYNG) is an intramembrane region (pore-forming). A Selectivity filter of repeat II motif is present at residues 612-615 (TGED). Ca(2+) is bound at residue Glu614. The Extracellular portion of the chain corresponds to 624–633 (IMAYGGPSYP). The chain crosses the membrane as a helical span at residues 634 to 653 (GMLVCIYFIILFVCGNYILL). The Cytoplasmic portion of the chain corresponds to 654 to 799 (NVFLAIAVDN…VLCHRIVNAT (146 aa)). Disordered stretches follow at residues 675-717 (KAKA…IPTT) and 731-757 (EVKD…LSPR). Position 687 is a phosphoserine; by PKA (Ser687). A compositionally biased stretch (basic and acidic residues) spans 690 to 711 (LPDKSEEEKSTMAKKLEQKPKG). The span at 742–751 (PGDDEEDEPE) shows a compositional bias: acidic residues. Positions 747–760 (EDEPEIPLSPRPRP) are interaction with STAC, STAC2 and STAC3 (via SH3 domains). Residues 786 to 1068 (NKIRVLCHRI…IFVGFVIVTF (283 aa)) form an III repeat. The helical transmembrane segment at 800 to 818 (WFTNFILLFILLSSAALAA) threads the bilayer. The Extracellular segment spans residues 819 to 830 (EDPIRADSMRNQ). The helical transmembrane segment at 831–850 (ILKHFDIGFTSVFTVEIVLK) threads the bilayer. Over 851 to 866 (MTTYGAFLHKGSFCRN) the chain is Cytoplasmic. A helical membrane pass occupies residues 867–885 (YFNMLDLLVVAVSLISMGL). The Extracellular segment spans residues 886-892 (ESSAISV). The helical transmembrane segment at 893–911 (VKILRVLRVLRPLRAINRA) threads the bilayer. Topologically, residues 912-930 (KGLKHVVQCMFVAISTIGN) are cytoplasmic. A helical membrane pass occupies residues 931-950 (IVLVTTLLQFMFACIGVQLF). The Extracellular portion of the chain corresponds to 951–1000 (KGKFFRCTDLSKMTEEECRGYYYVYKDGDPMQIELRHREWVHSDFHFDNV). Cys957 and Cys968 form a disulfide bridge. Residues 988-1077 (REWVHSDFHF…FQEQGETEYK (90 aa)) form a dihydropyridine binding region. An intramembrane region (pore-forming) is located at residues 1001 to 1021 (LSAMMSLFTVSTFEGWPQLLY). The short motif at 1012-1015 (TFEG) is the Selectivity filter of repeat III element. Residue Glu1014 coordinates Ca(2+). The Extracellular portion of the chain corresponds to 1022 to 1038 (KAIDSNAEDVGPIYNNR). The chain crosses the membrane as a helical span at residues 1039-1060 (VEMAIFFIIYIILIAFFMMNIF). At 1061 to 1118 (VGFVIVTFQEQGETEYKNCELDKNQRQCVQYALKARPLRCYIPKNPYQYQVWYIVTSS) the chain is on the cytoplasmic side. An IV repeat occupies 1105-1384 (NPYQYQVWYI…LFVAVIMDNF (280 aa)). Residues 1119–1140 (YFEYLMFALIMLNTICLGMQHY) traverse the membrane as a helical segment. A glycan (N-linked (GlcNAc...) asparagine) is linked at Asn1141. The Extracellular portion of the chain corresponds to 1141–1148 (NQSEQMNH). A helical transmembrane segment spans residues 1149–1170 (ISDILNVAFTIIFTLEMILKLM). The Cytoplasmic portion of the chain corresponds to 1171-1180 (AFKARGYFGD). Residues 1181–1200 (PWNVFDFLIVIGSIIDVILS) traverse the membrane as a helical segment. Over 1201–1231 (EIDTFLASSGGLYCLGGGCGNVDPDESARIS) the chain is Extracellular. A helical transmembrane segment spans residues 1232-1250 (SAFFRLFRVMRLIKLLSRA). The Cytoplasmic portion of the chain corresponds to 1251-1268 (EGVRTLLWTFIKSFQALP). The chain crosses the membrane as a helical span at residues 1269–1289 (YVALLIVMLFFIYAVIGMQMF). Residues 1290-1311 (GKIALVDGTQINRNNNFQTFPQ) are Extracellular-facing. The segment at residues 1312 to 1330 (AVLLLFRCATGEAWQEILL) is an intramembrane region (pore-forming). The short motif at 1321 to 1324 (TGEA) is the Selectivity filter of repeat IV element. The Extracellular segment spans residues 1331–1356 (ACSYGKLCDPESDYAPGEEYTCGTNF). The tract at residues 1337–1403 (LCDPESDYAP…LGPHHLDEFK (67 aa)) is dihydropyridine binding. An intrachain disulfide couples Cys1338 to Cys1352. Residues 1349–1391 (EYTCGTNFAYYYFISFYMLCAFLVINLFVAVIMDNFDYLTRDW) form a phenylalkylamine binding region. The chain crosses the membrane as a helical span at residues 1357–1381 (AYYYFISFYMLCAFLVINLFVAVIM). Residues 1382-1873 (DNFDYLTRDW…SQETLIPPRL (492 aa)) lie on the Cytoplasmic side of the membrane. An interaction with calmodulin region spans residues 1522-1542 (KFYATFLIQEHFRKFMKRQEE). Phosphoserine; by PKA and CAMK2 is present on Ser1575. Phosphoserine; by PKA is present on Ser1617. Positions 1731-1780 (MPRGQAPPAPCQCPRVESSMPEDRKSSTPGSLHEETPHSRSTRENTSRCS) are disordered. Residues 1751–1776 (PEDRKSSTPGSLHEETPHSRSTRENT) show a composition bias toward basic and acidic residues.

It belongs to the calcium channel alpha-1 subunit (TC 1.A.1.11) family. CACNA1S subfamily. As to quaternary structure, component of a calcium channel complex consisting of a pore-forming alpha subunit (CACNA1S) and the ancillary subunits CACNB1 or CACNB2, CACNG1 and CACNA2D1. The channel complex contains alpha, beta, gamma and delta subunits in a 1:1:1:1 ratio, i.e. it contains either CACNB1 or CACNB2. CACNA1S channel activity is modulated by the auxiliary subunits (CACNB1 or CACNB2, CACNG1 and CACNA2D1). Interacts with DYSF and JSRP1. Interacts with RYR1. Interacts with STAC, STAC2 and STAC3 (via their SH3 domains). Interacts with CALM. Post-translationally, the alpha-1S subunit is found in two isoforms in the skeletal muscle: a minor form of 212 kDa containing the complete amino acid sequence, and a major form of 190 kDa derived from the full-length form by post-translational proteolysis close to Phe-1690. In terms of processing, phosphorylated. Phosphorylation by PKA activates the calcium channel. Both the minor and major forms are phosphorylated in vitro by PKA. Phosphorylation at Ser-1575 is involved in beta-adrenergic-mediated regulation of the channel. Skeletal muscle specific.

Its subcellular location is the cell membrane. It localises to the sarcolemma. It is found in the T-tubule. The catalysed reaction is Ca(2+)(in) = Ca(2+)(out). Its activity is regulated as follows. Channel activity is blocked by dihydropyridines (DHP), phenylalkylamines, and by benzothiazepines. In terms of biological role, pore-forming, alpha-1S subunit of the voltage-gated calcium channel that gives rise to L-type calcium currents in skeletal muscle. Calcium channels containing the alpha-1S subunit play an important role in excitation-contraction coupling in skeletal muscle via their interaction with RYR1, which triggers Ca(2+) release from the sarcoplasmic reticulum and ultimately results in muscle contraction. Long-lasting (L-type) calcium channels belong to the 'high-voltage activated' (HVA) group. This is Voltage-dependent L-type calcium channel subunit alpha-1S (CACNA1S) from Homo sapiens (Human).